Here is a 181-residue protein sequence, read N- to C-terminus: MTTETLSLIKSSIKSIPDYPKKGILFRDVTSLLEDAQAYQATIQLLVEKYKDMGFTKVVGTEARGFLFGAPLALELGVGFVPVRKPGKLPRQTVAQSYELEYGTDTLEIHVDAIKPGDKVLVVDDLLATGGTIEATTKLIRQLGGEVEHAAFVINLPEIGGDKRLEGLGLQVYSICEFEGH.

The protein belongs to the purine/pyrimidine phosphoribosyltransferase family. In terms of assembly, homodimer.

Its subcellular location is the cytoplasm. The enzyme catalyses AMP + diphosphate = 5-phospho-alpha-D-ribose 1-diphosphate + adenine. The protein operates within purine metabolism; AMP biosynthesis via salvage pathway; AMP from adenine: step 1/1. Functionally, catalyzes a salvage reaction resulting in the formation of AMP, that is energically less costly than de novo synthesis. This Vibrio cholerae serotype O1 (strain ATCC 39541 / Classical Ogawa 395 / O395) protein is Adenine phosphoribosyltransferase.